Reading from the N-terminus, the 153-residue chain is Prostaglandin E synthase (153 aa).

Residues 1-13 (MPPPVLALVSGQA) are Lumenal-facing. A helical membrane pass occupies residues 14 to 42 (LPAFLLCSTLLVIKMYVVAVITGQVRLRK). Arginine 39 lines the glutathione pocket. At 43 to 61 (KAFANPEDALRHGGLQYCR) the chain is on the cytoplasmic side. The chain crosses the membrane as a helical span at residues 62 to 91 (SDQDVDRCLRAHRNDMETIYPFLFLGFVYS). Position 74-78 (74-78 (RNDME)) interacts with glutathione. The Lumenal segment spans residues 92–96 (FLGPD). A helical transmembrane segment spans residues 97–120 (PFIAQMHFLVFFLGRMVHTVAYLG). Positions 114 and 118 each coordinate glutathione. The Cytoplasmic portion of the chain corresponds to 121–124 (KLRA). A helical membrane pass occupies residues 125 to 153 (PTRSLAYTVAQLPCASMALQIVWEAACHL). 127 to 131 (RSLAY) contributes to the glutathione binding site.

Belongs to the MAPEG family. In terms of assembly, homotrimer. The cofactor is glutathione.

The protein resides in the membrane. The protein localises to the cytoplasm. It is found in the perinuclear region. It carries out the reaction prostaglandin H2 = prostaglandin E2. The enzyme catalyses 2-glyceryl-prostaglandin H2 = 2-glyceryl-prostaglandin E2. It catalyses the reaction prostaglandin G2 = (15S)-15-hydroperoxy-prostaglandin E2. The catalysed reaction is 1-chloro-2,4-dinitrobenzene + glutathione = 2,4-dinitrophenyl-S-glutathione + chloride + H(+). It carries out the reaction (5S)-hydroperoxy-(6E,8Z,11Z,14Z)-eicosatetraenoate + 2 glutathione = (5S)-hydroxy-(6E,8Z,11Z,14Z)-eicosatetraenoate + glutathione disulfide + H2O. It functions in the pathway lipid metabolism; prostaglandin biosynthesis. Its function is as follows. Terminal enzyme of the cyclooxygenase (COX)-2-mediated prostaglandin E2 (PGE2) biosynthetic pathway. Catalyzes the glutathione-dependent oxidoreduction of prostaglandin endoperoxide H2 (PGH2) to prostaglandin E2 (PGE2) in response to inflammatory stimuli. Plays a key role in inflammation response, fever and pain. Also catalyzes the oxidoreduction of endocannabinoids into prostaglandin glycerol esters and PGG2 into 15-hydroperoxy-PGE2. In addition, displays low glutathione transferase and glutathione-dependent peroxidase activities, toward 1-chloro-2,4-dinitrobenzene and 5-hydroperoxyicosatetraenoic acid (5-HPETE), respectively. The polypeptide is Prostaglandin E synthase (PTGES) (Canis lupus familiaris (Dog)).